Consider the following 430-residue polypeptide: uncharacterized protein (430 aa).

This is an uncharacterized protein from Human herpesvirus 7 (strain JI) (HHV-7).